A 251-amino-acid chain; its full sequence is RING-H2 finger protein ATL10 (251 aa).

Residues 59 to 79 (MMLLSILICGIICCLGLHYII) traverse the membrane as a helical segment. The segment at 135 to 177 (CVICLSDFVSGEQLRLLPKCNHGFHVRCIDKWLQQHLTCPKCR) adopts an RING-type; atypical zinc-finger fold.

Belongs to the RING-type zinc finger family. ATL subfamily.

Its subcellular location is the membrane. The catalysed reaction is S-ubiquitinyl-[E2 ubiquitin-conjugating enzyme]-L-cysteine + [acceptor protein]-L-lysine = [E2 ubiquitin-conjugating enzyme]-L-cysteine + N(6)-ubiquitinyl-[acceptor protein]-L-lysine.. Its pathway is protein modification; protein ubiquitination. The sequence is that of RING-H2 finger protein ATL10 (ATL10) from Arabidopsis thaliana (Mouse-ear cress).